Reading from the N-terminus, the 248-residue chain is Serine/arginine-rich splicing factor 1 (248 aa).

Serine 2 is modified (N-acetylserine). The residue at position 2 (serine 2) is a Phosphoserine. The region spanning 16 to 91 (CRIYVGNLPP…YRLRVEFPRS (76 aa)) is the RRM 1 domain. Lysine 30 participates in a covalent cross-link: Glycyl lysine isopeptide (Lys-Gly) (interchain with G-Cter in SUMO2). The residue at position 38 (lysine 38) is an N6-acetyllysine; alternate. Lysine 38 participates in a covalent cross-link: Glycyl lysine isopeptide (Lys-Gly) (interchain with G-Cter in SUMO2); alternate. The segment at 88–134 (FPRSGRGTGRGGGGGGGGGAPRGRYGPPSRRSENRVVVSGLPPSGSW) is disordered. Asymmetric dimethylarginine; alternate occurs at positions 93, 97, and 109. An omega-N-methylarginine; alternate mark is found at arginine 93, arginine 97, and arginine 109. Over residues 93 to 108 (RGTGRGGGGGGGGGAP) the composition is skewed to gly residues. Omega-N-methylarginine is present on arginine 111. An RRM 2 domain is found at 121-195 (NRVVVSGLPP…ETAYIRVKVD (75 aa)). The residue at position 133 (serine 133) is a Phosphoserine. Lysine 179 is modified (N6-acetyllysine). The tract at residues 191 to 248 (RVKVDGPRSPSYGRSRSRSRSRSRSRSRSNSRSRSYSPRRSRGSPRYSPRHSRSRSRT) is disordered. Positions 198–247 (RSPSYGRSRSRSRSRSRSRSRSNSRSRSYSPRRSRGSPRYSPRHSRSRSR) are interaction with SAFB1. Serine 199 and serine 201 each carry phosphoserine. Tyrosine 202 carries the post-translational modification Phosphotyrosine. 6 positions are modified to phosphoserine: serine 205, serine 207, serine 209, serine 231, serine 234, and serine 238. The span at 205-248 (SRSRSRSRSRSRSRSNSRSRSYSPRRSRGSPRYSPRHSRSRSRT) shows a compositional bias: basic residues.

It belongs to the splicing factor SR family. Consists of two polypeptides of p32 and p33. Identified in the spliceosome C complex. Component of a ribonucleoprotein complex containing mRNAs and RNA-binding proteins including DDX5, HNRNPH2 and SRSF1 as well as splicing regulator ARVCF. In vitro, self-associates and binds SRSF2, SNRNP70 and U2AF1 but not U2AF2. Binds SREK1/SFRS12. Interacts with SAFB/SAFB1. Interacts with PSIP1/LEDGF. Interacts with RSRC1 (via Arg/Ser-rich domain). Interacts with ZRSR2/U2AF1-RS2. Interacts with CCDC55 (via C-terminus). Interacts with SRPK1 and a sliding docking interaction is essential for its sequential and processive phosphorylation by SRPK1. Interacts with NXF1. Interacts with CCNL1, CCNL2 and CDK11B. Interacts with RRP1B. Interacts (when phosphorylated in its RS domain) with TNPO3; promoting nuclear import. Interacts with ILDR1 (via C-terminus) and ILDR2. Post-translationally, phosphorylated by CLK1, CLK2, CLK3 and CLK4. Phosphorylated by SRPK1 at multiple serines in its RS domain via a directional (C-terminal to N-terminal) and a dual-track mechanism incorporating both processive phosphorylation (in which the kinase stays attached to the substrate after each round of phosphorylation) and distributive phosphorylation steps (in which the kinase and substrate dissociate after each phosphorylation event). The RS domain of SRSF1 binds to a docking groove in the large lobe of the kinase domain of SRPK1 and this induces certain structural changes in SRPK1 and/or RRM 2 domain of SRSF1, allowing RRM 2 to bind the kinase and initiate phosphorylation. The cycles continue for several phosphorylation steps in a processive manner (steps 1-8) until the last few phosphorylation steps (approximately steps 9-12). During that time, a mechanical stress induces the unfolding of the beta-4 motif in RRM 2, which then docks at the docking groove of SRPK1. This also signals RRM 2 to begin to dissociate, which facilitates SRSF1 dissociation after phosphorylation is completed. Asymmetrically dimethylated at arginines, probably by PRMT1, methylation promotes localization to nuclear speckles.

Its subcellular location is the cytoplasm. The protein localises to the nucleus speckle. In terms of biological role, plays a role in preventing exon skipping, ensuring the accuracy of splicing and regulating alternative splicing. Interacts with other spliceosomal components, via the RS domains, to form a bridge between the 5'- and 3'-splice site binding components, U1 snRNP and U2AF. Can stimulate binding of U1 snRNP to a 5'-splice site-containing pre-mRNA. Binds to purine-rich RNA sequences, either the octamer, 5'-RGAAGAAC-3' (r=A or G) or the decamers, AGGACAGAGC/AGGACGAAGC. Binds preferentially to the 5'-CGAGGCG-3' motif in vitro. Three copies of the octamer constitute a powerful splicing enhancer in vitro, the ASF/SF2 splicing enhancer (ASE) which can specifically activate ASE-dependent splicing. May function as export adapter involved in mRNA nuclear export through the TAP/NXF1 pathway. The protein is Serine/arginine-rich splicing factor 1 (SRSF1) of Bos taurus (Bovine).